The chain runs to 378 residues: Circumsporozoite protein (378 aa).

A signal peptide spans 1 to 22; it reads MKNFNLLAVSSILLVDLFPTHC. Residues 50–291 are disordered; it reads AQVRQSASRG…GQGQNNEGAN (242 aa). Composition is skewed to basic and acidic residues over residues 66–92 and 101–126; these read PKNEEGADKQKKDEKKVEPKKPRENKL and ARAEDGARAEDGARAEDGARAEDGAR. Residues 80 to 88 are required for the binding to heparan sulfate proteoglycans (HSPGs) on the surface of host hepatocytes; sequence KKVEPKKPR. A region I; contains the proteolytic cleavage site region spans residues 91–95; sequence KLKQP. A run of 24 repeats spans residues 99–104, 105–110, 111–116, 117–122, 123–128, 129–134, 135–140, 141–146, 147–152, 153–158, 159–164, 165–170, 171–176, 177–182, 183–188, 189–194, 195–200, 201–206, 212–222, 223–233, 234–244, 245–255, 256–266, and 267–277. Residues 99 to 206 form an 18 X 6 AA tandem repeats of D-G-A-R-A-[EA] region; the sequence is DGARAEDGAR…ARAADGARAE (108 aa). Positions 127–140 are enriched in low complexity; sequence AADGARAADGARAA. The span at 141–162 shows a compositional bias: basic and acidic residues; the sequence is DGARAEDGARAEDGARAEDGAR. The span at 163–200 shows a compositional bias: low complexity; that stretch reads AADGARAADGARAADGARAADGARAADGARAADGARAA. The tract at residues 212–277 is 6 X 11 AA tandem repeats of G-N-[QR]-[AE]-G-G-Q-A-G-A-G; that stretch reads GNREGGQAGA…NRAGGQAGAG (66 aa). Gly residues predominate over residues 214–283; sequence REGGQAGAGG…AGAGDAGAGQ (70 aa). In terms of domain architecture, TSP type-1 spans 304-356; the sequence is KIRSTIGVEWSPCTVTCGKGVRMRRKVSAANKKPEELDVNDLETEVCTMDKCA. Disulfide bonds link Cys-316–Cys-350 and Cys-320–Cys-355. An O-linked (Fuc) threonine glycan is attached at Thr-319. Residue Cys-355 is the site of GPI-anchor amidated cysteine attachment. Residues 356–378 constitute a propeptide, removed in mature form; it reads AGIFNVVSNSLGLVILLVLALFN.

This sequence belongs to the plasmodium circumsporozoite protein family. Post-translationally, during host cell invasion, proteolytically cleaved at the cell membrane in the region I by a papain-like cysteine protease of parasite origin. Cleavage is triggered by the sporozoite contact with highly sulfated heparan sulfate proteoglycans (HSPGs) present on the host hepatocyte cell surface. Cleavage exposes the TSP type-1 (TSR) domain and is required for productive invasion of host hepatocytes but not for adhesion to the host cell membrane. Cleavage is dispensable for sporozoite development in the oocyst, motility and for traversal of host and vector cells. O-glycosylated; maybe by POFUT2.

It localises to the cell membrane. Its subcellular location is the cytoplasm. Functionally, essential sporozoite protein. In the mosquito vector, required for sporozoite development in the oocyst, migration through the vector hemolymph and entry into the vector salivary glands. In the vertebrate host, required for sporozoite migration through the host dermis and infection of host hepatocytes. Binds to highly sulfated heparan sulfate proteoglycans (HSPGs) on the surface of host hepatocytes. In the vertebrate host, binds to highly sulfated heparan sulfate proteoglycans (HSPGs) on the surface of host hepatocytes and is required for sporozoite invasion of the host hepatocytes. The chain is Circumsporozoite protein from Plasmodium cynomolgi (strain London).